Consider the following 368-residue polypeptide: 1-deoxy-D-xylulose 5-phosphate reductoisomerase (368 aa).

NADPH is bound by residues Thr7, Gly8, Ser9, Ile10, Gly31, Lys32, Asn33, and Asn113. Lys114 is a 1-deoxy-D-xylulose 5-phosphate binding site. Glu115 provides a ligand contact to NADPH. Asp133 is a Mn(2+) binding site. 1-deoxy-D-xylulose 5-phosphate contacts are provided by Ser134, Glu135, Ser158, and His181. Residue Glu135 participates in Mn(2+) binding. NADPH is bound at residue Gly187. 4 residues coordinate 1-deoxy-D-xylulose 5-phosphate: Ser194, Asn199, Lys200, and Glu203. Glu203 contributes to the Mn(2+) binding site.

Belongs to the DXR family. Mg(2+) serves as cofactor. The cofactor is Mn(2+).

It catalyses the reaction 2-C-methyl-D-erythritol 4-phosphate + NADP(+) = 1-deoxy-D-xylulose 5-phosphate + NADPH + H(+). Its pathway is isoprenoid biosynthesis; isopentenyl diphosphate biosynthesis via DXP pathway; isopentenyl diphosphate from 1-deoxy-D-xylulose 5-phosphate: step 1/6. In terms of biological role, catalyzes the NADPH-dependent rearrangement and reduction of 1-deoxy-D-xylulose-5-phosphate (DXP) to 2-C-methyl-D-erythritol 4-phosphate (MEP). In Helicobacter pylori (strain Shi470), this protein is 1-deoxy-D-xylulose 5-phosphate reductoisomerase.